The following is a 352-amino-acid chain: Mitochondrial ubiquitin ligase activator of NFKB 1 (352 aa).

Residues 1 to 8 lie on the Cytoplasmic side of the membrane; sequence MENGGRPS. A helical transmembrane segment spans residues 9–29; that stretch reads LCQFILLGTTSVVTAALYSVY. The Mitochondrial intermembrane portion of the chain corresponds to 30–238; the sequence is RQKAWVSQEL…LLQRQESSVR (209 aa). Lys52 is covalently cross-linked (Glycyl lysine isopeptide (Lys-Gly) (interchain with G-Cter in ubiquitin)). A helical membrane pass occupies residues 239–259; that stretch reads LWKVLALVFGFATCATLFFIL. Over 260-352 the chain is Cytoplasmic; the sequence is RKQYLQRQER…ITRVIPLYNS (93 aa). Glycyl lysine isopeptide (Lys-Gly) (interchain with G-Cter in ubiquitin) cross-links involve residues Lys273 and Lys299. An RING-type zinc finger spans residues 302–340; that stretch reads CVVCLSSFKSCVFLECGHVCSCTECYRALPEPKKCPICR.

Homooligomer. Interacts with MAP3K7/TAK1. Interacts with UBC9. Interacts with and sumoylates DNM1L. Interacts with MAVS. Interacts with TP53 (via N-terminus); the interaction leads to ubiquitination and proteasomal degradation of TP53. Ubiquitinated by PRKN during mitophagy, leading to its degradation and enhancement of mitophagy. Deubiquitinated by USP30.

It is found in the mitochondrion outer membrane. The protein localises to the peroxisome. The enzyme catalyses S-ubiquitinyl-[E2 ubiquitin-conjugating enzyme]-L-cysteine + [acceptor protein]-L-lysine = [E2 ubiquitin-conjugating enzyme]-L-cysteine + N(6)-ubiquitinyl-[acceptor protein]-L-lysine.. It functions in the pathway protein modification; protein ubiquitination. It participates in protein modification; protein sumoylation. Its function is as follows. Exhibits weak E3 ubiquitin-protein ligase activity. E3 ubiquitin ligases accept ubiquitin from an E2 ubiquitin-conjugating enzyme in the form of a thioester and then directly transfer the ubiquitin to targeted substrates. Can ubiquitinate AKT1 preferentially at 'Lys-284' involving 'Lys-48'-linked polyubiquitination and seems to be involved in regulation of Akt signaling by targeting phosphorylated Akt to proteasomal degradation. Mediates polyubiquitination of cytoplasmic TP53 at 'Lys-24' which targets TP53 for proteasomal degradation, thus reducing TP53 levels in the cytoplasm and mitochondrion. Proposed to preferentially act as a SUMO E3 ligase at physiological concentrations. Plays a role in the control of mitochondrial morphology by promoting mitochondrial fragmentation, and influences mitochondrial localization. Likely to promote mitochondrial fission through negatively regulating the mitochondrial fusion proteins MFN1 and MFN2, acting in a pathway that is parallel to the PRKN/PINK1 regulatory pathway. May also be involved in the sumoylation of the membrane fission protein DNM1L. Inhibits cell growth. When overexpressed, activates JNK through MAP3K7/TAK1 and induces caspase-dependent apoptosis. Involved in the modulation of innate immune defense against viruses by inhibiting RIGI-dependent antiviral response. Can mediate RIGI sumoylation and disrupt its polyubiquitination. This is Mitochondrial ubiquitin ligase activator of NFKB 1 (MUL1) from Macaca fascicularis (Crab-eating macaque).